Reading from the N-terminus, the 509-residue chain is Tyrosine-protein kinase STK (509 aa).

Residues 1-16 (MGPCCSKQTKALNNQP) show a composition bias toward polar residues. The disordered stretch occupies residues 1 to 23 (MGPCCSKQTKALNNQPDKSKSKD). Residue Gly2 is the site of N-myristoyl glycine attachment. Residues 59 to 120 (PGVTIFVALY…PSTYVAPEKS (62 aa)) form the SH3 domain. The SH2 domain maps to 126-218 (WYFGDVKRAE…GLVCALTLPC (93 aa)). One can recognise a Protein kinase domain in the interval 240-495 (LRLNRKLGAG…LQGVLEDYFV (256 aa)). Residues 246 to 254 (LGAGQFGEV) and Lys268 each bind ATP. Asp360 (proton acceptor) is an active-site residue. Phosphotyrosine; by autocatalysis is present on Tyr390.

It belongs to the protein kinase superfamily. Tyr protein kinase family. SRC subfamily.

The catalysed reaction is L-tyrosyl-[protein] + ATP = O-phospho-L-tyrosyl-[protein] + ADP + H(+). The chain is Tyrosine-protein kinase STK (STK) from Hydra vulgaris (Hydra).